Here is a 981-residue protein sequence, read N- to C-terminus: Proline-rich transmembrane protein 3 (981 aa).

Residues 1-27 (MASSPWGCVCGLLLLLLPLLGTGPALG) form the signal peptide. Residues 28–474 (RGFPRPLENS…RVLSFSWELH (447 aa)) are Extracellular-facing. 2 disordered regions span residues 43 to 107 (PGAH…GAQR) and 169 to 457 (PPSL…TAPP). The span at 65 to 85 (PRADSHRNSDVRHAPAEEMPE) shows a compositional bias: basic and acidic residues. The tract at residues 297–302 (SWEVSS) is O-glycosylated at one site. An O-linked (GalNAc...) serine glycan is attached at Ser-329. The segment covering 331–340 (APDRPSKPER) has biased composition (basic and acidic residues). Residue Thr-363 is glycosylated (O-linked (GalNAc...) threonine). N-linked (GlcNAc...) asparagine glycosylation is present at Asn-379. Residues 411-427 (APSTSRRGLIRVTTQRA) are compositionally biased toward polar residues. Positions 437–457 (TASSMASAPASSPPANATAPP) are enriched in low complexity. A helical transmembrane segment spans residues 475-495 (VYGVGVLFLLPALLALAALAA). Topologically, residues 496-501 (APAGPR) are cytoplasmic. A helical membrane pass occupies residues 502–522 (LALVAAVLVLVASALRSAYML). Topologically, residues 523–542 (TDPYGSQARLGVRGGLVLYN) are extracellular. Residues 543-563 (LPFPLLLTALAALTLLGLGAG) traverse the membrane as a helical segment. Residues 564–570 (LPPPLQN) are Cytoplasmic-facing. Residues 571 to 591 (PLLLGAVALVHGVGLLATDLL) traverse the membrane as a helical segment. Topologically, residues 592–598 (STWSVLN) are extracellular. Residues 599 to 619 (LLTQGLSCAWGAAVALGTLCL) form a helical membrane-spanning segment. Residues 620 to 638 (CRRRLLDGPRGWDASPGPR) lie on the Cytoplasmic side of the membrane. Residues 639-659 (LLAVAGALGLLASGLQLAAAL) form a helical membrane-spanning segment. Topologically, residues 660–679 (WLYPGPGRVGRFSWAWWGVH) are extracellular. Residues 680 to 700 (FWLRLLELTWALALALAAVAA) traverse the membrane as a helical segment. At 701–981 (ARPRPPTEHA…RSASSDTIEL (281 aa)) the chain is on the cytoplasmic side. The interval 759-807 (AESGQLATPSSGAWGSAASLGRGPQGGPGLSRNGVGPAPSLSELDLRPP) is disordered. Over residues 765 to 780 (ATPSSGAWGSAASLGR) the composition is skewed to low complexity. At Ser-777 the chain carries Phosphoserine. At Arg-780 the chain carries Omega-N-methylarginine. A phosphoserine mark is found at Ser-789, Ser-798, Ser-808, Ser-815, Ser-854, Ser-874, Ser-902, Ser-903, and Ser-911. Positions 836 to 865 (LRGLASPPPGGALRPRRGSHPKAELDDAGS) are disordered. The interval 937–981 (TVQLLPAPTPAPDSTAARQGDGQGEVQPRGKPGESRSASSDTIEL) is disordered. The span at 972–981 (RSASSDTIEL) shows a compositional bias: polar residues.

The protein localises to the membrane. This chain is Proline-rich transmembrane protein 3 (PRRT3), found in Homo sapiens (Human).